The chain runs to 248 residues: 2-acetamido-2-deoxy-D-galactose-binding seed lectin 2 (248 aa).

Residue Asn-119 is glycosylated (N-linked (GlcNAc...) asparagine; partial). 2 residues coordinate Mn(2+): Glu-128 and Asp-130. Positions 130, 132, 134, and 138 each coordinate Ca(2+). Residues Asp-138 and His-144 each coordinate Mn(2+).

Belongs to the leguminous lectin family.

The chain is 2-acetamido-2-deoxy-D-galactose-binding seed lectin 2 from Cytisus scoparius (Scotch broom).